A 382-amino-acid polypeptide reads, in one-letter code: Galactokinase (382 aa).

34–37 is a substrate binding site; sequence EHTD. Residue 124-130 coordinates ATP; that stretch reads GAGLSSS. Mg(2+)-binding residues include serine 130 and glutamate 162. The Proton acceptor role is filled by aspartate 174. Position 223 (tyrosine 223) interacts with substrate.

The protein belongs to the GHMP kinase family. GalK subfamily.

Its subcellular location is the cytoplasm. It carries out the reaction alpha-D-galactose + ATP = alpha-D-galactose 1-phosphate + ADP + H(+). It participates in carbohydrate metabolism; galactose metabolism. In terms of biological role, catalyzes the transfer of the gamma-phosphate of ATP to D-galactose to form alpha-D-galactose-1-phosphate (Gal-1-P). This is Galactokinase from Salmonella typhi.